A 64-amino-acid chain; its full sequence is Myotoxin-2 (64 aa).

The signal sequence occupies residues 1 to 21; it reads KILYLLFAFLFLAFLSEPGNA. An intrachain disulfide couples Cys32 to Cys51.

Belongs to the crotamine-myotoxin family. In terms of assembly, monomer. Expressed by the venom gland.

The protein localises to the secreted. Functionally, cationic peptide that possesses multiple functions. It acts as a cell-penetrating peptide (CPP), and as a potent voltage-gated potassium channel (Kv) inhibitor. It exhibits antimicrobial activities, hind limb paralysis, and severe muscle necrosis by a non-enzymatic mechanism. This is Myotoxin-2 from Crotalus durissus terrificus (South American rattlesnake).